The following is a 719-amino-acid chain: MAFATEHPVVAHSEYRAVEEIVRAGGHFEVVSPHAPAGDQPAAIDELERRINAGERDVVLLGATGTGKSATTAWLIERLQRPTLVMAPNKTLAAQLANELREMLPHNAVEYFVSYYDYYQPEAYIAQTDTYIEKDSSINDDVERLRHSATSALLSRRDVVVVASVSCIYGLGTPQSYLDRSVELKVGEEVPRDGLLRLLVDVQYTRNDMSFTRGSFRVRGDTVEIIPSYEELAVRIEFFGDEIEALYYLHPLTGEVIRQVDSLRIFPATHYVAGPERMAHAVSAIEEELAERLAELESQGKLLEAQRLRMRTNYDIEMMRQVGFCSGIENYSRHIDGRGPGTPPATLLDYFPEDFLLVIDESHVTVPQIGGMYEGDISRKRNLVEYGFRLPSACDNRPLTWEEFADRIGQTVYLSATPGPYELSQTGGEFVEQVIRPTGLVDPKVVVKPTKGQIDDLIGEIRTRADADQRVLVTTLTKKMAEDLTDYLLEMGIRVRYLHSEVDTLRRVELLRQLRLGDYDVLVGINLLREGLDLPEVSLVAILDADKEGFLRSSRSLIQTIGRAARNVSGEVHMYADKITDSMREAIDETERRRAKQIAYNEANGIDPQPLRKKIADILDQVYREADDTAVVEVGGSGRNASRGRRAQGEPGRAVSAGVFEGRDTSAMPRAELADLIKDLTAQMMAAARDLQFELAARFRDEIADLKRELRGMDAAGLK.

The region spanning arginine 49 to isoleucine 435 is the Helicase ATP-binding domain. An ATP-binding site is contributed by glycine 62 to serine 69. The Beta-hairpin signature appears at tyrosine 115 to isoleucine 138. Residues glutamine 453–isoleucine 606 form the Helicase C-terminal domain. The tract at residues glycine 635–alanine 654 is disordered. A UVR domain is found at alanine 674–glutamate 709.

Belongs to the UvrB family. Forms a heterotetramer with UvrA during the search for lesions. Interacts with UvrC in an incision complex.

It localises to the cytoplasm. The UvrABC repair system catalyzes the recognition and processing of DNA lesions. A damage recognition complex composed of 2 UvrA and 2 UvrB subunits scans DNA for abnormalities. Upon binding of the UvrA(2)B(2) complex to a putative damaged site, the DNA wraps around one UvrB monomer. DNA wrap is dependent on ATP binding by UvrB and probably causes local melting of the DNA helix, facilitating insertion of UvrB beta-hairpin between the DNA strands. Then UvrB probes one DNA strand for the presence of a lesion. If a lesion is found the UvrA subunits dissociate and the UvrB-DNA preincision complex is formed. This complex is subsequently bound by UvrC and the second UvrB is released. If no lesion is found, the DNA wraps around the other UvrB subunit that will check the other stand for damage. This is UvrABC system protein B from Mycobacterium tuberculosis (strain CDC 1551 / Oshkosh).